A 373-amino-acid chain; its full sequence is 4-hydroxy-3-methylbut-2-en-1-yl diphosphate synthase (flavodoxin) (373 aa).

Residues cysteine 270, cysteine 273, cysteine 305, and glutamate 312 each coordinate [4Fe-4S] cluster.

The protein belongs to the IspG family. The cofactor is [4Fe-4S] cluster.

The catalysed reaction is (2E)-4-hydroxy-3-methylbut-2-enyl diphosphate + oxidized [flavodoxin] + H2O + 2 H(+) = 2-C-methyl-D-erythritol 2,4-cyclic diphosphate + reduced [flavodoxin]. It participates in isoprenoid biosynthesis; isopentenyl diphosphate biosynthesis via DXP pathway; isopentenyl diphosphate from 1-deoxy-D-xylulose 5-phosphate: step 5/6. Converts 2C-methyl-D-erythritol 2,4-cyclodiphosphate (ME-2,4cPP) into 1-hydroxy-2-methyl-2-(E)-butenyl 4-diphosphate. In Vibrio atlanticus (strain LGP32) (Vibrio splendidus (strain Mel32)), this protein is 4-hydroxy-3-methylbut-2-en-1-yl diphosphate synthase (flavodoxin).